We begin with the raw amino-acid sequence, 460 residues long: tRNA modification GTPase MnmE (460 aa).

(6S)-5-formyl-5,6,7,8-tetrahydrofolate contacts are provided by R24, E81, and K121. The region spanning 218-384 is the TrmE-type G domain; the sequence is GLVVAIAGPP…MVEALAGFAA (167 aa). GTP is bound by residues 228-233, 247-253, and 272-275; these read NVGKST, SPHAGTT, and DTAG. Mg(2+) is bound by residues S232 and T253. K460 is a binding site for (6S)-5-formyl-5,6,7,8-tetrahydrofolate.

This sequence belongs to the TRAFAC class TrmE-Era-EngA-EngB-Septin-like GTPase superfamily. TrmE GTPase family. Homodimer. Heterotetramer of two MnmE and two MnmG subunits. The cofactor is K(+).

It localises to the cytoplasm. Its function is as follows. Exhibits a very high intrinsic GTPase hydrolysis rate. Involved in the addition of a carboxymethylaminomethyl (cmnm) group at the wobble position (U34) of certain tRNAs, forming tRNA-cmnm(5)s(2)U34. The protein is tRNA modification GTPase MnmE of Rhodopseudomonas palustris (strain HaA2).